Here is a 154-residue protein sequence, read N- to C-terminus: Major allergen Dau c 1 (154 aa).

This sequence belongs to the BetVI family. In terms of assembly, homodimer.

This Daucus carota (Wild carrot) protein is Major allergen Dau c 1.